The chain runs to 423 residues: MAKKDAYKLTYNTSDTLFATNLGDILAPSFASIKQTRNLLGFSSGVDSTALFFLLLECEIPFDIAIVHYHTRLQADDEVAYAKELAATYNKLCFVAHAPHFNANFESNARSFRFDFFQSLIIKHHYTHLLLAHQLNDRLEWLLMQLTKGAGLGNLLGFADERYNYDKSLNNYTIVRPLESIPKNELYRFCKERGIKYFEDSSNQDKTFRRNYFRYEFCDKLVNEFSAGIARSLSYLQRDRQSLENMLYADTLELESLKMQILRQIHNISVPMHTHKICCIIFSIHKSKVQDDENLLLLFCDKVAKQCGYVLSAAQRDEISKSRFNCKIAHFIITSNTHRIYIAQDSMSMYKIVTQSPMSKKFKIFCASHRVPSKLRFLLWAEFCAWEMLCKSAYADADYLVNEQGNQHLFTHFLAKIDNFFTL.

Position 43–48 (43–48 (SSGVDS)) interacts with ATP.

This sequence belongs to the tRNA(Ile)-lysidine synthase family.

It is found in the cytoplasm. It catalyses the reaction cytidine(34) in tRNA(Ile2) + L-lysine + ATP = lysidine(34) in tRNA(Ile2) + AMP + diphosphate + H(+). In terms of biological role, ligates lysine onto the cytidine present at position 34 of the AUA codon-specific tRNA(Ile) that contains the anticodon CAU, in an ATP-dependent manner. Cytidine is converted to lysidine, thus changing the amino acid specificity of the tRNA from methionine to isoleucine. The chain is tRNA(Ile)-lysidine synthase from Helicobacter hepaticus (strain ATCC 51449 / 3B1).